A 363-amino-acid chain; its full sequence is Protein-arginine kinase (363 aa).

In terms of domain architecture, Phosphagen kinase C-terminal spans 24–254 (IVLSSRIRLA…AQLIEQERSA (231 aa)). Residues 27–31 (SSRIR), histidine 92, arginine 125, 176–180 (RASVM), and 207–212 (RGIYGE) contribute to the ATP site. Residues 337–342 (RDIKRA) carry the RDXXRA motif of the pArg binding pocket involved in allosteric regulation motif.

This sequence belongs to the ATP:guanido phosphotransferase family.

It catalyses the reaction L-arginyl-[protein] + ATP = N(omega)-phospho-L-arginyl-[protein] + ADP + H(+). With respect to regulation, appears to be allosterically activated by the binding of pArg-containing polypeptides to the pArg-binding pocket localized in the C-terminal domain of McsB. Functionally, catalyzes the specific phosphorylation of arginine residues in a large number of proteins. Is part of the bacterial stress response system. Protein arginine phosphorylation has a physiologically important role and is involved in the regulation of many critical cellular processes, such as protein homeostasis, motility, competence, and stringent and stress responses, by regulating gene expression and protein activity. This chain is Protein-arginine kinase, found in Bacillus pumilus (strain SAFR-032).